Reading from the N-terminus, the 201-residue chain is Recombination protein RecR (201 aa).

The C4-type zinc-finger motif lies at 58 to 73; the sequence is CEQCASITDTCPCRIC. In terms of domain architecture, Toprim spans 81 to 178; sequence DKLCLVSEWD…ELSRLAQGIP (98 aa).

This sequence belongs to the RecR family.

Functionally, may play a role in DNA repair. It seems to be involved in an RecBC-independent recombinational process of DNA repair. It may act with RecF and RecO. The protein is Recombination protein RecR of Maridesulfovibrio salexigens (strain ATCC 14822 / DSM 2638 / NCIMB 8403 / VKM B-1763) (Desulfovibrio salexigens).